Consider the following 157-residue polypeptide: SsrA-binding protein (157 aa).

Positions 135-157 (KRDTIKDREGKREVERAMKTNHR) are disordered.

The protein belongs to the SmpB family.

It is found in the cytoplasm. Functionally, required for rescue of stalled ribosomes mediated by trans-translation. Binds to transfer-messenger RNA (tmRNA), required for stable association of tmRNA with ribosomes. tmRNA and SmpB together mimic tRNA shape, replacing the anticodon stem-loop with SmpB. tmRNA is encoded by the ssrA gene; the 2 termini fold to resemble tRNA(Ala) and it encodes a 'tag peptide', a short internal open reading frame. During trans-translation Ala-aminoacylated tmRNA acts like a tRNA, entering the A-site of stalled ribosomes, displacing the stalled mRNA. The ribosome then switches to translate the ORF on the tmRNA; the nascent peptide is terminated with the 'tag peptide' encoded by the tmRNA and targeted for degradation. The ribosome is freed to recommence translation, which seems to be the essential function of trans-translation. This chain is SsrA-binding protein, found in Albidiferax ferrireducens (strain ATCC BAA-621 / DSM 15236 / T118) (Rhodoferax ferrireducens).